The following is a 372-amino-acid chain: Putative 26S proteasome regulatory subunit homolog MTBMA_c13930 (372 aa).

An ATP-binding site is contributed by 164 to 171 (GSPGTGKT).

This sequence belongs to the AAA ATPase family.

The 26S proteasome is involved in the ATP-dependent degradation of ubiquitinated proteins. The regulatory (or ATPase) complex confers ATP dependency and substrate specificity to the 26S complex. The polypeptide is Putative 26S proteasome regulatory subunit homolog MTBMA_c13930 (Methanothermobacter marburgensis (strain ATCC BAA-927 / DSM 2133 / JCM 14651 / NBRC 100331 / OCM 82 / Marburg) (Methanobacterium thermoautotrophicum)).